The chain runs to 189 residues: MDRLKQSLLDAPVIEKEEYQYFVHPISDGVPMLRPELLREIVIRIIRKAELEDVDKIVTPAAMGIHISTAVSLMTDIPLVVIRKRQYGLEGEVSLQQVTGYSESEMYVNDVYEGDKVLVLDDVLSTGGTLAGITGALEEIGAEIVDIVAVIKKVGGENKIDDSDFDVKTLINVDVEDMEVIIVDEQGDG.

The protein belongs to the purine/pyrimidine phosphoribosyltransferase family. Archaeal HPRT subfamily.

May catalyze a purine salvage reaction, the substrate is unknown. The protein is HGPRTase-like protein of Halorhabdus utahensis (strain DSM 12940 / JCM 11049 / AX-2).